Consider the following 221-residue polypeptide: NEP1-interacting protein-like 1 (221 aa).

Transmembrane regions (helical) follow at residues 35–55, 69–89, and 95–115; these read LFTF…GALI, VGAI…LLLW, and GIGC…GRLV. The segment at 176–218 adopts an RING-type; atypical zinc-finger fold; sequence CSVCLQDFQVGETVRSLPHCHHMFHLPCIDKWLRRHASCPLCR.

The protein belongs to the RING-type zinc finger family. NIP subfamily.

Its subcellular location is the membrane. May be involved in the early steps of the plant defense signaling pathway. The chain is NEP1-interacting protein-like 1 (ATL27) from Arabidopsis thaliana (Mouse-ear cress).